A 126-amino-acid chain; its full sequence is Small ribosomal subunit protein uS12 (126 aa).

The residue at position 89 (Asp-89) is a 3-methylthioaspartic acid.

This sequence belongs to the universal ribosomal protein uS12 family. In terms of assembly, part of the 30S ribosomal subunit. Contacts proteins S8 and S17. May interact with IF1 in the 30S initiation complex.

Its function is as follows. With S4 and S5 plays an important role in translational accuracy. Functionally, interacts with and stabilizes bases of the 16S rRNA that are involved in tRNA selection in the A site and with the mRNA backbone. Located at the interface of the 30S and 50S subunits, it traverses the body of the 30S subunit contacting proteins on the other side and probably holding the rRNA structure together. The combined cluster of proteins S8, S12 and S17 appears to hold together the shoulder and platform of the 30S subunit. The protein is Small ribosomal subunit protein uS12 of Polynucleobacter asymbioticus (strain DSM 18221 / CIP 109841 / QLW-P1DMWA-1) (Polynucleobacter necessarius subsp. asymbioticus).